A 161-amino-acid chain; its full sequence is MDIPKQYLSLFILIIFITTKLSQADHKNDIPVPNDPSSTNSVFPTSKRTVEINNDLGNQLTLLYHCKSKDDDLGNRTLQPGESWSFSFGRQFFGRTLYFCSFSWPNESHSFDIYKDHRDSGGDNKCESDRCVWKIRRNGPCRFNDETKQFDLCYPWNKSLY.

The N-terminal stretch at 1–24 is a signal peptide; sequence MDIPKQYLSLFILIIFITTKLSQA. Residues Asn75, Asn106, and Asn157 are each glycosylated (N-linked (GlcNAc...) asparagine).

This sequence belongs to the plant self-incompatibility (S1) protein family.

The protein localises to the secreted. This chain is S-protein homolog 2, found in Arabidopsis thaliana (Mouse-ear cress).